We begin with the raw amino-acid sequence, 302 residues long: Recombination-associated protein RdgC (302 aa).

Belongs to the RdgC family.

The protein localises to the cytoplasm. Its subcellular location is the nucleoid. In terms of biological role, may be involved in recombination. This chain is Recombination-associated protein RdgC, found in Mannheimia succiniciproducens (strain KCTC 0769BP / MBEL55E).